An 857-amino-acid chain; its full sequence is Blue light receptor lreA (857 aa).

PAS domains lie at isoleucine 306–asparagine 328, leucine 479–aspartate 542, and leucine 608–aspartate 642. A GATA-type zinc finger spans residues cysteine 811 to cysteine 836.

Transcription factor that acts as a blue light sensor. Plays crucial roles in fungal growth and asexual development. Involved in conidiophore formation, sclerotium production, and conidial stress tolerance. Promotes conidiation by inducing the expression of brlA and abaA. Positively regulates the fungal pathogenicity towards maize. In blue light conditions, inhibits aflatoxin B1 (AFB1) biosynthesis by down-regulating the expression of key genes such as aflA, aflJ, aflH, aflO and aflK. The protein is Blue light receptor lreA of Aspergillus flavus.